The chain runs to 63 residues: SERF-like protein C1705.02 (63 aa).

Residues 1–13 (MSRGNQRDVDRAR) show a composition bias toward basic and acidic residues. Residues 1 to 63 (MSRGNQRDVD…EANGGSKGKK (63 aa)) form a disordered region. A compositionally biased stretch (basic residues) spans 14–24 (NLKKSQASKKK). A compositionally biased stretch (basic and acidic residues) spans 25–35 (QAGDPTKRLEA).

Belongs to the SERF family.

It localises to the cytoplasm. It is found in the nucleus. Its subcellular location is the nucleolus. The polypeptide is SERF-like protein C1705.02 (Schizosaccharomyces pombe (strain 972 / ATCC 24843) (Fission yeast)).